The chain runs to 1008 residues: Chitin synthase C (1008 aa).

The segment at 1 to 160 is disordered; that stretch reads MIYEMMVMKR…GGRTIDPNNR (160 aa). Low complexity predominate over residues 10 to 19; that stretch reads RSANSRAQNN. The span at 34–45 shows a compositional bias: polar residues; sequence ESPSRPVSSLGN. Asn312 is a glycosylation site (N-linked (GlcNAc...) asparagine). Helical transmembrane passes span 642–662, 682–702, 717–737, 755–775, and 787–807; these read FMQL…FYFI, IFVI…IISM, IIVY…LVVI, LFVN…YASF, and SAAY…YAFC. Asn833 carries N-linked (GlcNAc...) asparagine glycosylation. Transmembrane regions (helical) follow at residues 887-907 and 910-930; these read MVSI…EVYG and AGGT…LALI. Asn961 carries N-linked (GlcNAc...) asparagine glycosylation.

Belongs to the chitin synthase family. Class II subfamily.

The protein resides in the cell membrane. It carries out the reaction [(1-&gt;4)-N-acetyl-beta-D-glucosaminyl](n) + UDP-N-acetyl-alpha-D-glucosamine = [(1-&gt;4)-N-acetyl-beta-D-glucosaminyl](n+1) + UDP + H(+). Functionally, polymerizes chitin, a structural polymer of the cell wall and septum, by transferring the sugar moiety of UDP-GlcNAc to the non-reducing end of the growing chitin polymer. Involved in cell wall integrity and mycelial morphology. Plays an important role in septal growth or maintenance. Acts as a positive regulator of conidiation, cellular responses to oxidative stresses, and the production of malic acid. Negatively regulates the citric acid production. The protein is Chitin synthase C of Aspergillus niger (strain ATCC MYA-4892 / CBS 513.88 / FGSC A1513).